Reading from the N-terminus, the 20-residue chain is Manganese peroxidase H5 (20 aa).

Belongs to the peroxidase family. Ligninase subfamily.

It is found in the secreted. It carries out the reaction 2 Mn(2+) + H2O2 + 2 H(+) = 2 Mn(3+) + 2 H2O. Its function is as follows. Catalyzes the oxidation of Mn(2+) to Mn(3+). The latter, acting as a diffusible redox mediator, is capable of oxidizing a variety of lignin compounds. In Phanerodontia chrysosporium (White-rot fungus), this protein is Manganese peroxidase H5.